A 336-amino-acid polypeptide reads, in one-letter code: Ketoreductase adrE (336 aa).

Tyrosine 171 provides a ligand contact to NADP(+).

Belongs to the NAD(P)-dependent epimerase/dehydratase family. Dihydroflavonol-4-reductase subfamily.

It participates in secondary metabolite biosynthesis; terpenoid biosynthesis. Ketoreductase; part of the gene cluster that mediates the biosynthesis of andrastins, meroterpenoid compounds that exhibit inhibitory activity against ras farnesyltransferase, suggesting that they could be promising leads for antitumor agents. The first step of the pathway is the synthesis of 3,5-dimethylorsellinic acid (DMOA) by the polyketide synthase adrD via condensation of one acetyl-CoA starter unit with 3 malonyl-CoA units and 2 methylations. DMAO is then converted to farnesyl-DMAO by the prenyltransferase adrG. The methyltransferase adrK catalyzes the methylation of the carboxyl group of farnesyl-DMAO to farnesyl-DMAO methyl ester which is further converted to epoxyfarnesyl-DMAO methyl ester by the FAD-dependent monooxygenase adrH. The terpene cyclase adrI then catalyzes the carbon skeletal rearrangement to generate the andrastin E, the first compound in the pathway having the andrastin scaffold, with the tetracyclic ring system. The post-cyclization tailoring enzymes adrF, adrE, adrJ, and adrA, are involved in the conversion of andrastin E into andrastin A. The short chain dehydrogenase adrF is responsible for the oxidation of the C-3 a hydroxyl group of andrastin E to yield the corresponding ketone, andrastin D. The ketoreductase adrE stereoselectively reduces the carbonyl moiety to reverse the stereochemistry of the C-3 position to yield andrastin F. The acetyltransferase adrJ is the acetyltransferase that attaches the acetyl group to the C-3 hydroxyl group of andrastin F to yield andrastin C. Finally, the cytochrome P450 monooxygenase adrA catalyzes two sequential oxidation reactions of the C-23 methyl group, to generate the corresponding alcohol andrastin B, and aldehyde andrastin A. This is Ketoreductase adrE from Penicillium rubens (strain ATCC 28089 / DSM 1075 / NRRL 1951 / Wisconsin 54-1255) (Penicillium chrysogenum).